A 409-amino-acid polypeptide reads, in one-letter code: Broad specificity amino-acid racemase (409 aa).

An N-terminal signal peptide occupies residues 1 to 23 (MPFSRTLLALSLGMALLQNPAFA). A disulfide bridge connects residues Cys-70 and Cys-96. Residue Lys-74 is the Proton acceptor of the active site. N6-(pyridoxal phosphate)lysine is present on Lys-74. Arg-173 is a substrate binding site. Tyr-300 serves as the catalytic Proton acceptor. Position 348 (Met-348) interacts with substrate.

This sequence belongs to the alanine racemase family. Bsr subfamily. As to quaternary structure, homodimer. Pyridoxal 5'-phosphate is required as a cofactor.

Its subcellular location is the periplasm. It carries out the reaction an L-alpha-amino acid = a D-alpha-amino acid. It catalyses the reaction L-lysine = D-lysine. The enzyme catalyses L-arginine = D-arginine. The catalysed reaction is L-ornithine = D-ornithine. It carries out the reaction L-alanine = D-alanine. It catalyses the reaction L-methionine = D-methionine. Its function is as follows. Amino-acid racemase able to utilize a broad range of substrates. Is mostly active with lysine and arginine and, to a lesser extent, with ornithine, whereas is about 10 times less active with alanine, methionine and ethionine. With phenylalanine as substrate only a trace activity is detectable, and is inactive with glutamate. Plays a key role in the catabolism of D-arginine and D-lysine, that allows P.taetrolens strain NBRC 3460 to grow on these basic D-amino acids as a sole carbon source. This Pseudomonas taetrolens protein is Broad specificity amino-acid racemase.